A 349-amino-acid chain; its full sequence is uncharacterized protein (349 aa).

A helical membrane pass occupies residues 221–241; that stretch reads AFVVWIGSGLNIIWWTGIVLL. The segment covering 328 to 339 has biased composition (pro residues); the sequence is VASAPPAVPSQP. A disordered region spans residues 328 to 349; sequence VASAPPAVPSQPPEYSSVFPPV.

It localises to the host membrane. This is an uncharacterized protein from Human cytomegalovirus (strain Merlin) (HHV-5).